We begin with the raw amino-acid sequence, 175 residues long: Inorganic pyrophosphatase 1 (175 aa).

Substrate contacts are provided by lysine 30, arginine 44, and tyrosine 56. Residues aspartate 66, aspartate 71, and aspartate 103 each contribute to the Mg(2+) site. Substrate is bound at residue tyrosine 142.

This sequence belongs to the PPase family. As to quaternary structure, homohexamer. The cofactor is Mg(2+).

Its subcellular location is the cytoplasm. It catalyses the reaction diphosphate + H2O = 2 phosphate + H(+). Catalyzes the hydrolysis of inorganic pyrophosphate (PPi) forming two phosphate ions. The chain is Inorganic pyrophosphatase 1 from Pseudomonas syringae pv. tomato (strain ATCC BAA-871 / DC3000).